A 1698-amino-acid chain; its full sequence is Bromodomain adjacent to zinc finger domain protein 2A (1698 aa).

Disordered stretches follow at residues 240-262 (QSTPNPLLPPDVSNLDDPSQLPS) and 352-387 (VMQESASEMGEDPEGSKAEEPVSGPENVSQDEMTIE). Over residues 377-387 (ENVSQDEMTIE) the composition is skewed to polar residues. In terms of domain architecture, MBD spans 418 to 489 (IATPEQVCFP…EHFSFSPRMP (72 aa)). Disordered regions lie at residues 524–550 (RGRPRNLEKAKAKEQKAKRGRGRPPKV) and 610–653 (EKEE…DRKL). Over residues 528–540 (RNLEKAKAKEQKA) the composition is skewed to basic and acidic residues. Residues 541–553 (KRGRGRPPKVKMI) constitute a DNA-binding region (a.T hook 1). Positions 579–638 (VQLCKLKKKMRRKARNQEAKLEAAKKLKEIKEKEEKKQKIQKAKNQEKAKNQEKKRTRRQ) form a coiled coil. Positions 610 to 632 (EKEEKKQKIQKAKNQEKAKNQEK) are enriched in basic and acidic residues. The DDT domain maps to 701–766 (SCAFSDCLTT…LQAAMINPGL (66 aa)). Disordered regions lie at residues 884 to 905 (ITTTEVSLRRRSERNAEENDEL), 1013 to 1063 (SFGS…PLTN), 1088 to 1110 (TVLTPESSPPHSESTPIISSEAT), and 1123 to 1149 (TPCRNHNQGLSTHSSNRLSPPSPTAAT). The span at 890-900 (SLRRRSERNAE) shows a compositional bias: basic and acidic residues. Composition is skewed to polar residues over residues 1023-1040 (HPRNSTAEPEQNSTSCHC) and 1051-1063 (VTDQFPNSVPLTN). Low complexity predominate over residues 1091–1108 (TPESSPPHSESTPIISSE). The span at 1124-1149 (PCRNHNQGLSTHSSNRLSPPSPTAAT) shows a compositional bias: polar residues. The a.T hook 3 DNA-binding region spans 1204–1216 (EKRRGRRPSKLLK). A PHD-type zinc finger spans residues 1476–1526 (KVTCLYCRKGDNDELLLLCDSCDRGCHTYCHRPRMNEIPEGDWFCPTCISL). Positions 1549–1587 (FTEDSPSKPSRRREHPTASQFSPGESPASKKRRMGTRSQ) are disordered. A Bromo domain is found at 1585-1689 (RSQSPDLTFC…KFYDARWEEF (105 aa)).

It belongs to the WAL family. Component of the NoRC complex, at least composed of SMARCA5/SNF2H and BAZ2A/TIP5.

The protein resides in the nucleus. It is found in the nucleolus. Its function is as follows. Essential component of the NoRC (nucleolar remodeling complex) complex, a complex that mediates silencing of a fraction of rDNA by recruiting histone-modifying enzymes and DNA methyltransferases, leading to heterochromatin formation and transcriptional silencing. In the complex, it plays a central role by being recruited to rDNA and by targeting chromatin modifying enzymes such as HDAC1, leading to repress RNA polymerase I transcription. Recruited to rDNA via its interaction with TTF1 and its ability to recognize and bind histone H4 acetylated on 'Lys-16' (H4K16ac), leading to deacetylation of H4K5ac, H4K8ac, H4K12ac but not H4K16ac. Specifically binds pRNAs, 150-250 nucleotide RNAs that are complementary in sequence to the rDNA promoter; pRNA-binding is required for heterochromatin formation and rDNA silencing. This Xenopus laevis (African clawed frog) protein is Bromodomain adjacent to zinc finger domain protein 2A (baz2a).